Consider the following 377-residue polypeptide: Erythronate-4-phosphate dehydrogenase (377 aa).

Substrate contacts are provided by Ser45 and Thr67. Residues 127–128, Asp147, and Thr176 each bind NAD(+); that span reads QV. The active site involves Arg209. Asp233 is an NAD(+) binding site. Residue Glu238 is part of the active site. His255 acts as the Proton donor in catalysis. An NAD(+)-binding site is contributed by Gly258. Position 259 (Tyr259) interacts with substrate.

It belongs to the D-isomer specific 2-hydroxyacid dehydrogenase family. PdxB subfamily. In terms of assembly, homodimer.

It localises to the cytoplasm. The enzyme catalyses 4-phospho-D-erythronate + NAD(+) = (R)-3-hydroxy-2-oxo-4-phosphooxybutanoate + NADH + H(+). Its pathway is cofactor biosynthesis; pyridoxine 5'-phosphate biosynthesis; pyridoxine 5'-phosphate from D-erythrose 4-phosphate: step 2/5. Its function is as follows. Catalyzes the oxidation of erythronate-4-phosphate to 3-hydroxy-2-oxo-4-phosphonooxybutanoate. This chain is Erythronate-4-phosphate dehydrogenase, found in Vibrio atlanticus (strain LGP32) (Vibrio splendidus (strain Mel32)).